Reading from the N-terminus, the 154-residue chain is Myoglobin (154 aa).

Residues 2–148 enclose the Globin domain; sequence GLSDDEWHHV…FRNDMASKYK (147 aa). His-65 is a binding site for nitrite. An O2-binding site is contributed by His-65. Position 94 (His-94) interacts with heme b.

It belongs to the globin family. Monomeric.

Its subcellular location is the cytoplasm. The protein resides in the sarcoplasm. It catalyses the reaction Fe(III)-heme b-[protein] + nitric oxide + H2O = Fe(II)-heme b-[protein] + nitrite + 2 H(+). It carries out the reaction H2O2 + AH2 = A + 2 H2O. In terms of biological role, monomeric heme protein which primary function is to store oxygen and facilitate its diffusion within muscle tissues. Reversibly binds oxygen through a pentacoordinated heme iron and enables its timely and efficient release as needed during periods of heightened demand. Depending on the oxidative conditions of tissues and cells, and in addition to its ability to bind oxygen, it also has a nitrite reductase activity whereby it regulates the production of bioactive nitric oxide. Under stress conditions, like hypoxia and anoxia, it also protects cells against reactive oxygen species thanks to its pseudoperoxidase activity. The sequence is that of Myoglobin (MB) from Graptemys geographica (Common map turtle).